The primary structure comprises 274 residues: Large ribosomal subunit protein uL2 (274 aa).

The tract at residues 223–274 (VAMNPVDHPHGGGEGRTSGGRHPVSPWGMPTKGFKTRKNKSTDKYIVRRRNK) is disordered.

It belongs to the universal ribosomal protein uL2 family. In terms of assembly, part of the 50S ribosomal subunit. Forms a bridge to the 30S subunit in the 70S ribosome.

One of the primary rRNA binding proteins. Required for association of the 30S and 50S subunits to form the 70S ribosome, for tRNA binding and peptide bond formation. It has been suggested to have peptidyltransferase activity; this is somewhat controversial. Makes several contacts with the 16S rRNA in the 70S ribosome. The polypeptide is Large ribosomal subunit protein uL2 (Aliivibrio fischeri (strain ATCC 700601 / ES114) (Vibrio fischeri)).